The chain runs to 253 residues: uncharacterized protein (253 aa).

The 207-residue stretch at 30–236 (AQGRQVAQLW…AVDDDAALMA (207 aa)) folds into the BPL/LPL catalytic domain.

This is an uncharacterized protein from Cupriavidus necator (strain ATCC 17699 / DSM 428 / KCTC 22496 / NCIMB 10442 / H16 / Stanier 337) (Ralstonia eutropha).